Reading from the N-terminus, the 346-residue chain is Uracil-DNA glycosylase (346 aa).

The disordered stretch occupies residues 1 to 105 (MSGKITDFFE…KLKNEEKSEE (105 aa)). Positions 20 to 29 (AENKDNDKEL) are enriched in basic and acidic residues. Low complexity predominate over residues 30-42 (TSTTTTTTTTSTT). Basic residues predominate over residues 43–64 (SKKKVAAAPKKKAAVASKKRKH). Residues 67-86 (SDEETDKEEQQNDDDDDGEE) are compositionally biased toward acidic residues. D186 functions as the Proton acceptor in the catalytic mechanism.

The protein belongs to the uracil-DNA glycosylase (UDG) superfamily. UNG family.

It localises to the mitochondrion. The protein localises to the nucleus. It catalyses the reaction Hydrolyzes single-stranded DNA or mismatched double-stranded DNA and polynucleotides, releasing free uracil.. Its function is as follows. Excises uracil residues from the DNA which can arise as a result of misincorporation of dUMP residues by DNA polymerase or due to deamination of cytosine. This is Uracil-DNA glycosylase (uglA) from Dictyostelium discoideum (Social amoeba).